The chain runs to 350 residues: D-alanine--D-alanine ligase (350 aa).

The 201-residue stretch at 135–335 (KLYAKNLGVK…LAQSLPKTPK (201 aa)) folds into the ATP-grasp domain. 164–219 (KPSFNFPFIVKPNNAGSSLGVSVVKEEKELAYALDGAFEYSKEVLIEPFIQRVKEY) provides a ligand contact to ATP. Mg(2+)-binding residues include D291, E303, and N305.

This sequence belongs to the D-alanine--D-alanine ligase family. Requires Mg(2+) as cofactor. It depends on Mn(2+) as a cofactor.

The protein resides in the cytoplasm. It carries out the reaction 2 D-alanine + ATP = D-alanyl-D-alanine + ADP + phosphate + H(+). Its pathway is cell wall biogenesis; peptidoglycan biosynthesis. Its function is as follows. Cell wall formation. The chain is D-alanine--D-alanine ligase from Helicobacter acinonychis (strain Sheeba).